The primary structure comprises 152 residues: Actin-related protein 2/3 complex subunit 5-B (152 aa).

Positions 21–44 are disordered; the sequence is NKFVDDQLQEEPAEPQGPDEAEVD. Residues 27–43 are compositionally biased toward acidic residues; the sequence is QLQEEPAEPQGPDEAEV.

The protein belongs to the ARPC5 family. Component of the Arp2/3 complex composed of actr2/arp2, actr3/arp3, arpc1 (arpc1a or arpc1b), arpc2, arpc3, arpc4 and arpc5.

The protein localises to the cytoplasm. It localises to the cytoskeleton. It is found in the cell projection. The protein resides in the nucleus. In terms of biological role, component of the Arp2/3 complex, a multiprotein complex that mediates actin polymerization upon stimulation by nucleation-promoting factor (NPF). The Arp2/3 complex mediates the formation of branched actin networks in the cytoplasm, providing the force for cell motility. In addition to its role in the cytoplasmic cytoskeleton, the Arp2/3 complex also promotes actin polymerization in the nucleus, thereby regulating gene transcription and repair of damaged DNA. The Arp2/3 complex promotes homologous recombination (HR) repair in response to DNA damage by promoting nuclear actin polymerization, leading to drive motility of double-strand breaks (DSBs). The polypeptide is Actin-related protein 2/3 complex subunit 5-B (arpc5-b) (Xenopus laevis (African clawed frog)).